The following is a 319-amino-acid chain: Malate dehydrogenase (319 aa).

NAD(+) is bound by residues 10–15 (GAGNIG) and D34. Substrate is bound by residues R83 and R89. Residues N96 and 119–121 (ITN) contribute to the NAD(+) site. Substrate contacts are provided by N121 and R152. The active-site Proton acceptor is H176.

It belongs to the LDH/MDH superfamily. MDH type 3 family.

It catalyses the reaction (S)-malate + NAD(+) = oxaloacetate + NADH + H(+). Catalyzes the reversible oxidation of malate to oxaloacetate. This chain is Malate dehydrogenase, found in Francisella tularensis subsp. mediasiatica (strain FSC147).